Here is a 680-residue protein sequence, read N- to C-terminus: Major capsid protein (680 aa).

N-acetylmethionine; by host N-acetyltransferase MAK3 is present on M1.

It belongs to the totivirus major capsid protein family. Acetylation is necessary for viral assembly.

It is found in the virion. Its function is as follows. Capsid protein self-assembles to form an icosahedral capsid with a T=2 symmetry, 40 nm in diameter, and consisting of 60 capsid proteins asymmetric dimers. The capsid encapsulates the genomic dsRNA and the polymerase and remains intact following cell entry to protect the dsRNA from degradation and to prevent unfavorable antiviral responses in the host cell during all the replication cycle of the virus. Nascent transcripts are transcribed within the structural confines of the virion and are extruded into the cytoplasm. Binds and removes 5' cap structures from cellular mRNA. Forms a covalent bond with m7GMP through His-154 of the capsid protein while releasing the mRNA body. This Saccharomyces cerevisiae virus L-A (ScV-L-A) protein is Major capsid protein (gag).